Consider the following 411-residue polypeptide: MFSRAVRLSRAALPIRVASQRVPIAARRSVTTNAAQAQVDKSTIPESEDEPFTIRLSDESFETYELDPPPYTLEVTKKQLKQMYYDMVVVRQMEMAADRLYKEKKIRGFCHLSVGQEAVAVGVEHAIEKTDDVITSYRCHGFAYMRGGTVRSIIGELLGRREGIAYGKGGSMHMFTKGFYGGNGIVGAQVPVGAGLAFAQKYTGGKKATVILYGDGASNQGQVFEAFNMAKLWNLPALFGCENNKYGMGTSAARSSALTDYYKRGQYIPGLKVNGMDVLAVKAAVQYGKQWTVEGNGPLVLEYVTYRYGGHSMSDPGTTYRTREEIQRMRSTNDPIAGLKQRIINWGVATEEEVKGIDKAARAHVNEEVAAAEAMAPPEPTAKILFEDIYVKGTEPRYIRGRTLDEVYYFN.

The transit peptide at 1–29 (MFSRAVRLSRAALPIRVASQRVPIAARRS) directs the protein to the mitochondrion. The pyruvate site is built by histidine 111, tyrosine 137, arginine 138, glycine 184, valine 186, aspartate 215, glycine 216, alanine 217, asparagine 244, and tyrosine 246. Residues tyrosine 137, arginine 138, glycine 184, valine 186, aspartate 215, glycine 216, alanine 217, and asparagine 244 each coordinate thiamine diphosphate. Residue aspartate 215 participates in Mg(2+) binding. Mg(2+) is bound by residues asparagine 244 and tyrosine 246. Residue histidine 311 participates in thiamine diphosphate binding.

As to quaternary structure, eukaryotic pyruvate dehydrogenase (PDH) complexes are organized as a core consisting of the oligomeric dihydrolipoamide acetyl-transferase (E2), around which are arranged multiple copies of pyruvate dehydrogenase (E1), dihydrolipoamide dehydrogenase (E3) and protein X (E3BP) bound by non-covalent bonds. The Chaetomium thermophilum PDH complex contains 60 E2 units, 12 E3BP units, about 20 E1 units, and 12 or more E3 units. The units are organized in 1 E2 60-mer, 4 E3BP trimers, about 20 E1 tetramers, and a maximum of 12 E3 dimers. Pyruvate dehydrogenase (E1) is active as a tetramer of 2 alpha and 2 beta subunits. The E3BP trimers are bound inside the icosahedral core with tetrahedral symmetry. It depends on thiamine diphosphate as a cofactor. Mg(2+) is required as a cofactor.

It localises to the mitochondrion. It catalyses the reaction N(6)-[(R)-lipoyl]-L-lysyl-[protein] + pyruvate + H(+) = N(6)-[(R)-S(8)-acetyldihydrolipoyl]-L-lysyl-[protein] + CO2. In terms of biological role, the 10-megadalton pyruvate dehydrogenase complex contains multiple copies of three enzymatic components: pyruvate dehydrogenase (E1), dihydrolipoamide acetyltransferase (E2) and lipoamide dehydrogenase (E3) and catalyzes the overall oxidative decarboxylation of pyruvate to form acetyl-CoA and CO(2). Within the complex, pyruvate and thiamine pyrophosphate (TPP or vitamin B1) are bound by pyruvate dehydrogenase E1 subunits alpha and beta and pyruvate is decarboxylated leading to the 2-carbon hydrohyethyl bound to TPP. The E2 component contains covalently-bound lipoyl cofactors and transfers the hydroxyethyl group from TPP to an oxidized form of covalently bound lipoamide, and the resulting acetyl group is then transferred to free coenzyme A to form acetyl-CoA and reduced dihydrolipoamide-E2. Finally, the flavoprotein dihydrolipoamide dehydrogenase (E3) re-oxidizes the lipoyl group of dihydrolipoamide-E2 to form lipoamide-E2 and NADH. A fourth subunit, E3BP, is responsible for tethering E3 in proximity to the core, forming the entire metabolon. The protein is Pyruvate dehydrogenase E1 component subunit alpha, mitochondrial of Chaetomium thermophilum (strain DSM 1495 / CBS 144.50 / IMI 039719) (Thermochaetoides thermophila).